The following is a 49-amino-acid chain: Large ribosomal subunit protein bL33B (49 aa).

Belongs to the bacterial ribosomal protein bL33 family.

This is Large ribosomal subunit protein bL33B (rpmG2) from Listeria innocua serovar 6a (strain ATCC BAA-680 / CLIP 11262).